The chain runs to 698 residues: Elongation factor G (698 aa).

The tr-type G domain occupies Asp10 to Leu285. Residues Ala19–Thr26, Asp83–His87, and Asn137–Asp140 each bind GTP.

It belongs to the TRAFAC class translation factor GTPase superfamily. Classic translation factor GTPase family. EF-G/EF-2 subfamily.

Its subcellular location is the cytoplasm. Functionally, catalyzes the GTP-dependent ribosomal translocation step during translation elongation. During this step, the ribosome changes from the pre-translocational (PRE) to the post-translocational (POST) state as the newly formed A-site-bound peptidyl-tRNA and P-site-bound deacylated tRNA move to the P and E sites, respectively. Catalyzes the coordinated movement of the two tRNA molecules, the mRNA and conformational changes in the ribosome. The polypeptide is Elongation factor G (Lactobacillus johnsonii (strain CNCM I-12250 / La1 / NCC 533)).